A 612-amino-acid chain; its full sequence is Dihydroxy-acid dehydratase (612 aa).

Mg(2+) is bound at residue aspartate 81. [2Fe-2S] cluster is bound at residue cysteine 122. 2 residues coordinate Mg(2+): aspartate 123 and lysine 124. The residue at position 124 (lysine 124) is an N6-carboxylysine. [2Fe-2S] cluster is bound at residue cysteine 193. Glutamate 489 contributes to the Mg(2+) binding site. Catalysis depends on serine 515, which acts as the Proton acceptor.

This sequence belongs to the IlvD/Edd family. Homodimer. It depends on [2Fe-2S] cluster as a cofactor. The cofactor is Mg(2+).

The enzyme catalyses (2R)-2,3-dihydroxy-3-methylbutanoate = 3-methyl-2-oxobutanoate + H2O. It catalyses the reaction (2R,3R)-2,3-dihydroxy-3-methylpentanoate = (S)-3-methyl-2-oxopentanoate + H2O. Its pathway is amino-acid biosynthesis; L-isoleucine biosynthesis; L-isoleucine from 2-oxobutanoate: step 3/4. It participates in amino-acid biosynthesis; L-valine biosynthesis; L-valine from pyruvate: step 3/4. In terms of biological role, functions in the biosynthesis of branched-chain amino acids. Catalyzes the dehydration of (2R,3R)-2,3-dihydroxy-3-methylpentanoate (2,3-dihydroxy-3-methylvalerate) into 2-oxo-3-methylpentanoate (2-oxo-3-methylvalerate) and of (2R)-2,3-dihydroxy-3-methylbutanoate (2,3-dihydroxyisovalerate) into 2-oxo-3-methylbutanoate (2-oxoisovalerate), the penultimate precursor to L-isoleucine and L-valine, respectively. This Xanthomonas euvesicatoria pv. vesicatoria (strain 85-10) (Xanthomonas campestris pv. vesicatoria) protein is Dihydroxy-acid dehydratase.